Consider the following 201-residue polypeptide: Recombination protein RecR (201 aa).

A C4-type zinc finger spans residues 55 to 70 (CVCCGAFCEGRTCALC). The Toprim domain occupies 78–173 (GIICVVERAQ…IVTRLASGIP (96 aa)).

The protein belongs to the RecR family.

May play a role in DNA repair. It seems to be involved in an RecBC-independent recombinational process of DNA repair. It may act with RecF and RecO. This Treponema pallidum (strain Nichols) protein is Recombination protein RecR.